Consider the following 620-residue polypeptide: Nuclear cap-binding protein subunit 3 (620 aa).

Lysine 12 participates in a covalent cross-link: Glycyl lysine isopeptide (Lys-Gly) (interchain with G-Cter in SUMO2). Residues 15-28 are compositionally biased toward low complexity; the sequence is APAGPALGLPSPEA. The tract at residues 15-42 is disordered; that stretch reads APAGPALGLPSPEAESGVDRGEPEPMEV. At serine 25 the chain carries Phosphoserine. Lysine 70 participates in a covalent cross-link: Glycyl lysine isopeptide (Lys-Gly) (interchain with G-Cter in SUMO2). Serine 73 carries the phosphoserine modification. Residues 126–187 are RNA recognition motif (RRM) domain; sequence ETIYICGVDE…MSSLPAQDKI (62 aa). The WLDD motif; essential for 7-methylguanosine-containing mRNA cap binding signature appears at 155-158; sequence WLDD. Positions 185-198 are enriched in basic and acidic residues; sequence DKIRSRDASEDKSA. Disordered regions lie at residues 185 to 233, 332 to 419, and 436 to 620; these read DKIR…LDTL, HSGL…PKKS, and IRNS…EAES. A Glycyl lysine isopeptide (Lys-Gly) (interchain with G-Cter in SUMO2) cross-link involves residue lysine 186. Phosphoserine is present on residues serine 209 and serine 210. Composition is skewed to acidic residues over residues 209–230 and 341–365; these read SSDD…DVEL and EPIE…DMDA. Residues 366–388 are compositionally biased toward basic and acidic residues; it reads DDRVVVEYHEELPALKQPRERSA. A Phosphothreonine modification is found at threonine 413. Serine 415 bears the Phosphoserine mark. 2 stretches are compositionally biased toward basic and acidic residues: residues 459-474 and 511-521; these read PPEK…DEKR and VRREPSSDVHS. Residue lysine 541 forms a Glycyl lysine isopeptide (Lys-Gly) (interchain with G-Cter in SUMO2) linkage. 2 stretches are compositionally biased toward basic and acidic residues: residues 554–569 and 585–598; these read KTKE…RAPG and IKEK…KSRL. Positions 611-620 are enriched in low complexity; the sequence is ESSSGSEAES. Phosphoserine is present on serine 620.

The protein belongs to the NCBP3 family. As to quaternary structure, component of an alternative cap-binding complex (CBC) composed of NCBP1/CBP80 and NCBP3. Interacts with SRRT, KPNA3, THOC5 and EIF4A3.

It is found in the nucleus. Its subcellular location is the cytoplasm. In terms of biological role, associates with NCBP1/CBP80 to form an alternative cap-binding complex (CBC) which plays a key role in mRNA export. NCBP3 serves as adapter protein linking the capped RNAs (m7GpppG-capped RNA) to NCBP1/CBP80. Unlike the conventional CBC with NCBP2 which binds both small nuclear RNA (snRNA) and messenger (mRNA) and is involved in their export from the nucleus, the alternative CBC with NCBP3 does not bind snRNA and associates only with mRNA thereby playing a role in only mRNA export. The alternative CBC is particularly important in cellular stress situations such as virus infections and the NCBP3 activity is critical to inhibit virus growth. In Homo sapiens (Human), this protein is Nuclear cap-binding protein subunit 3.